A 255-amino-acid polypeptide reads, in one-letter code: Folate receptor beta (255 aa).

Residues 1-16 form the signal peptide; sequence MVWKWMPLLLLLVCVA. 8 disulfide bridges follow: Cys-31–Cys-59, Cys-51–Cys-99, Cys-60–Cys-103, Cys-83–Cys-169, Cys-90–Cys-140, Cys-129–Cys-203, Cys-133–Cys-183, and Cys-146–Cys-163. Residues Asp-97 and Tyr-101 each coordinate folate. A glycan (N-linked (GlcNAc...) asparagine) is linked at Asn-115. Residues 118–122, 151–156, and Ser-190 contribute to the folate site; these read WRKER and HRGWDW. A glycan (N-linked (GlcNAc...) asparagine) is linked at Asn-195. A lipid anchor (GPI-anchor amidated asparagine) is attached at Asn-230. Residues 231 to 255 constitute a propeptide, removed in mature form; sequence AGEMLHGTGGLLLSLALMLQLWLLG.

It belongs to the folate receptor family. Post-translationally, N-glycosylated. As to expression, expressed in placenta and hematopoietic cells. Expression is increased in malignant tissues.

The protein localises to the cell membrane. The protein resides in the secreted. In terms of biological role, binds to folate and reduced folic acid derivatives and mediates delivery of 5-methyltetrahydrofolate and folate analogs into the interior of cells. Has high affinity for folate and folic acid analogs at neutral pH. Exposure to slightly acidic pH after receptor endocytosis triggers a conformation change that strongly reduces its affinity for folates and mediates their release. The chain is Folate receptor beta (FOLR2) from Homo sapiens (Human).